The sequence spans 311 residues: L-lactate dehydrogenase 2 (311 aa).

Positions 14, 35, and 40 each coordinate NAD(+). Substrate-binding positions include Arg90 and 122–125; that span reads NPCD. NAD(+) is bound by residues 120–122 and Thr145; that span reads ATN. Residue 150 to 153 participates in substrate binding; that stretch reads DTTR. His177 functions as the Proton acceptor in the catalytic mechanism. Substrate is bound at residue Thr230.

Belongs to the LDH/MDH superfamily. LDH family. In terms of assembly, homotetramer.

The protein localises to the cytoplasm. It carries out the reaction (S)-lactate + NAD(+) = pyruvate + NADH + H(+). Its pathway is fermentation; pyruvate fermentation to lactate; (S)-lactate from pyruvate: step 1/1. Its function is as follows. Catalyzes the conversion of lactate to pyruvate. The polypeptide is L-lactate dehydrogenase 2 (Listeria monocytogenes serovar 1/2a (strain ATCC BAA-679 / EGD-e)).